The sequence spans 143 residues: Large-conductance mechanosensitive channel (143 aa).

A run of 2 helical transmembrane segments spans residues 10-30 and 89-109; these read FAVK…GAFS and GSFI…FLMV.

It belongs to the MscL family. In terms of assembly, homopentamer.

The protein resides in the cell inner membrane. Its function is as follows. Channel that opens in response to stretch forces in the membrane lipid bilayer. May participate in the regulation of osmotic pressure changes within the cell. The chain is Large-conductance mechanosensitive channel from Burkholderia vietnamiensis (strain G4 / LMG 22486) (Burkholderia cepacia (strain R1808)).